Consider the following 348-residue polypeptide: Dihydroorotase (348 aa).

2 residues coordinate Zn(2+): histidine 14 and histidine 16. Residues 16–18 and asparagine 42 contribute to the substrate site; that span reads HLR. Residues lysine 100, histidine 137, and histidine 175 each coordinate Zn(2+). Position 100 is an N6-carboxylysine (lysine 100). Residue histidine 137 coordinates substrate. Residue leucine 220 participates in substrate binding. Residue aspartate 248 coordinates Zn(2+). Aspartate 248 is an active-site residue. Substrate-binding residues include histidine 252 and alanine 264.

The protein belongs to the metallo-dependent hydrolases superfamily. DHOase family. Class II DHOase subfamily. In terms of assembly, homodimer. Zn(2+) serves as cofactor.

The enzyme catalyses (S)-dihydroorotate + H2O = N-carbamoyl-L-aspartate + H(+). Its pathway is pyrimidine metabolism; UMP biosynthesis via de novo pathway; (S)-dihydroorotate from bicarbonate: step 3/3. Its function is as follows. Catalyzes the reversible cyclization of carbamoyl aspartate to dihydroorotate. The sequence is that of Dihydroorotase from Pseudomonas fluorescens (strain SBW25).